The chain runs to 186 residues: Ribosome-recycling factor (186 aa).

The protein belongs to the RRF family.

It localises to the cytoplasm. Its function is as follows. Responsible for the release of ribosomes from messenger RNA at the termination of protein biosynthesis. May increase the efficiency of translation by recycling ribosomes from one round of translation to another. In Cupriavidus pinatubonensis (strain JMP 134 / LMG 1197) (Cupriavidus necator (strain JMP 134)), this protein is Ribosome-recycling factor.